Here is an 84-residue protein sequence, read N- to C-terminus: UPF0473 protein CLD_2004 (84 aa).

It belongs to the UPF0473 family.

The protein is UPF0473 protein CLD_2004 of Clostridium botulinum (strain Okra / Type B1).